The chain runs to 432 residues: Enolase (432 aa).

Q167 is a (2R)-2-phosphoglycerate binding site. E209 functions as the Proton donor in the catalytic mechanism. Residues D246, E291, and D318 each coordinate Mg(2+). (2R)-2-phosphoglycerate-binding residues include K343, R372, S373, and K394. Catalysis depends on K343, which acts as the Proton acceptor.

It belongs to the enolase family. In terms of assembly, component of the RNA degradosome, a multiprotein complex involved in RNA processing and mRNA degradation. Mg(2+) is required as a cofactor.

The protein resides in the cytoplasm. It localises to the secreted. The protein localises to the cell surface. The enzyme catalyses (2R)-2-phosphoglycerate = phosphoenolpyruvate + H2O. It participates in carbohydrate degradation; glycolysis; pyruvate from D-glyceraldehyde 3-phosphate: step 4/5. Its function is as follows. Catalyzes the reversible conversion of 2-phosphoglycerate (2-PG) into phosphoenolpyruvate (PEP). It is essential for the degradation of carbohydrates via glycolysis. The sequence is that of Enolase from Aliivibrio salmonicida (strain LFI1238) (Vibrio salmonicida (strain LFI1238)).